The sequence spans 317 residues: Cytochrome c biogenesis protein CcsA (317 aa).

8 consecutive transmembrane segments (helical) span residues Ile-9 to Phe-29, Thr-46 to Ser-63, Leu-71 to Phe-91, Leu-98 to Leu-118, Met-143 to Ile-163, Ile-225 to Asn-245, Glu-258 to His-273, and Ala-286 to Leu-306.

Belongs to the CcmF/CycK/Ccl1/NrfE/CcsA family. May interact with Ccs1.

It is found in the plastid. The protein localises to the chloroplast thylakoid membrane. Its function is as follows. Required during biogenesis of c-type cytochromes (cytochrome c6 and cytochrome f) at the step of heme attachment. The polypeptide is Cytochrome c biogenesis protein CcsA (Citrus sinensis (Sweet orange)).